A 332-amino-acid polypeptide reads, in one-letter code: GTP 3',8-cyclase (332 aa).

One can recognise a Radical SAM core domain in the interval 9–220 (RFARKVDYLR…DQVRERIAER (212 aa)). Arg-18 serves as a coordination point for GTP. Residues Cys-25 and Cys-29 each contribute to the [4Fe-4S] cluster site. S-adenosyl-L-methionine is bound at residue Tyr-31. [4Fe-4S] cluster is bound at residue Cys-32. Arg-67 contacts GTP. S-adenosyl-L-methionine is bound at residue Gly-71. A GTP-binding site is contributed by Thr-98. S-adenosyl-L-methionine is bound at residue Ser-122. Position 159 (Lys-159) interacts with GTP. Met-193 is a binding site for S-adenosyl-L-methionine. Residues Cys-258 and Cys-261 each coordinate [4Fe-4S] cluster. GTP is bound at residue 263-265 (RVR). Cys-275 lines the [4Fe-4S] cluster pocket.

It belongs to the radical SAM superfamily. MoaA family. In terms of assembly, monomer and homodimer. The cofactor is [4Fe-4S] cluster.

It carries out the reaction GTP + AH2 + S-adenosyl-L-methionine = (8S)-3',8-cyclo-7,8-dihydroguanosine 5'-triphosphate + 5'-deoxyadenosine + L-methionine + A + H(+). It participates in cofactor biosynthesis; molybdopterin biosynthesis. Its function is as follows. Catalyzes the cyclization of GTP to (8S)-3',8-cyclo-7,8-dihydroguanosine 5'-triphosphate. The polypeptide is GTP 3',8-cyclase (Pseudomonas savastanoi pv. phaseolicola (strain 1448A / Race 6) (Pseudomonas syringae pv. phaseolicola (strain 1448A / Race 6))).